The sequence spans 319 residues: Carbonic anhydrase 6 (319 aa).

Positions methionine 1–alanine 14 are cleaved as a signal peptide. Residues histidine 16–phenylalanine 273 form the Alpha-carbonic anhydrase domain. Cysteine 37 and cysteine 219 are disulfide-bonded. The N-linked (GlcNAc...) asparagine glycan is linked to asparagine 62. Histidine 80 serves as the catalytic Proton donor/acceptor. 3 residues coordinate Zn(2+): histidine 106, histidine 108, and histidine 133. Threonine 215–threonine 216 lines the substrate pocket. Asparagine 251 is a glycosylation site (N-linked (GlcNAc...) asparagine).

The protein belongs to the alpha-carbonic anhydrase family. The cofactor is Zn(2+). As to expression, major constituent of saliva.

Its subcellular location is the secreted. It catalyses the reaction hydrogencarbonate + H(+) = CO2 + H2O. Its function is as follows. Reversible hydration of carbon dioxide. Its role in saliva is unknown. The sequence is that of Carbonic anhydrase 6 (CA6) from Bos taurus (Bovine).